The following is a 147-amino-acid chain: UPF0735 ACT domain-containing protein BPUM_2431 (147 aa).

One can recognise an ACT domain in the interval T70–S145.

This sequence belongs to the UPF0735 family.

In Bacillus pumilus (strain SAFR-032), this protein is UPF0735 ACT domain-containing protein BPUM_2431.